Here is a 182-residue protein sequence, read N- to C-terminus: NADH-quinone oxidoreductase subunit I (182 aa).

4Fe-4S ferredoxin-type domains lie at 50–82 (IILSRDPDGDERCVACNLCAVACPVGCISLQKA) and 92–121 (EFFRINFSRCIFCGLCEEACPTTAIQMTPD). Positions 62, 65, 68, 72, 101, 104, 107, and 111 each coordinate [4Fe-4S] cluster.

It belongs to the complex I 23 kDa subunit family. As to quaternary structure, NDH-1 is composed of 14 different subunits. Subunits NuoA, H, J, K, L, M, N constitute the membrane sector of the complex. [4Fe-4S] cluster is required as a cofactor.

Its subcellular location is the cell inner membrane. The enzyme catalyses a quinone + NADH + 5 H(+)(in) = a quinol + NAD(+) + 4 H(+)(out). Functionally, NDH-1 shuttles electrons from NADH, via FMN and iron-sulfur (Fe-S) centers, to quinones in the respiratory chain. The immediate electron acceptor for the enzyme in this species is believed to be ubiquinone. Couples the redox reaction to proton translocation (for every two electrons transferred, four hydrogen ions are translocated across the cytoplasmic membrane), and thus conserves the redox energy in a proton gradient. The chain is NADH-quinone oxidoreductase subunit I from Psychrobacter cryohalolentis (strain ATCC BAA-1226 / DSM 17306 / VKM B-2378 / K5).